A 138-amino-acid polypeptide reads, in one-letter code: Large-conductance mechanosensitive channel (138 aa).

The next 2 helical transmembrane spans lie at 10–30 and 76–96; these read FAMRGNVVDLAVGVIIGAAFG and GSFIQTIFDFVIVAFAIFLAI.

It belongs to the MscL family. As to quaternary structure, homopentamer.

It localises to the cell inner membrane. In terms of biological role, channel that opens in response to stretch forces in the membrane lipid bilayer. May participate in the regulation of osmotic pressure changes within the cell. In Serratia proteamaculans (strain 568), this protein is Large-conductance mechanosensitive channel.